A 274-amino-acid chain; its full sequence is Oxidized low-density lipoprotein receptor 1 (274 aa).

Positions 1–16 are enriched in basic and acidic residues; the sequence is MAVDDLKVKPMKDQPD. Positions 1–25 are disordered; the sequence is MAVDDLKVKPMKDQPDQKSNGKKPK. The Cytoplasmic segment spans residues 1-31; the sequence is MAVDDLKVKPMKDQPDQKSNGKKPKGLRFLS. A helical; Signal-anchor for type II membrane protein membrane pass occupies residues 32 to 54; that stretch reads SPWWCPAAVALGVLCLGSLMTII. Residues C36 and C46 are each lipidated (S-palmitoyl cysteine). Residues 55-150 are neck; that stretch reads MLGMQLLQVS…SGPCPEDWLW (96 aa). Residues 55 to 274 are Extracellular-facing; it reads MLGMQLLQVS…QKKANLLRSE (220 aa). N-linked (GlcNAc...) asparagine glycosylation is found at N73 and N139. A coiled-coil region spans residues 84–139; the sequence is QVLAQQQAEAASQESQRELKEMIETLAKRLDEKSKKQMELNHQYLNLQEALKRMDN. 3 cysteine pairs are disulfide-bonded: C144/C155, C172/C264, and C243/C256. The 115-residue stretch at 151-265 folds into the C-type lectin domain; sequence HGKNCYLFSS…CILVAYSICQ (115 aa).

As to quaternary structure, homodimer; disulfide-linked. May form a hexamer composed of 3 homodimers. Interacts with HSP70. In terms of processing, N-glycosylated.

It localises to the cell membrane. Its subcellular location is the membrane raft. The protein resides in the secreted. Receptor that mediates the recognition, internalization and degradation of oxidatively modified low density lipoprotein (oxLDL) by vascular endothelial cells. OxLDL is a marker of atherosclerosis that induces vascular endothelial cell activation and dysfunction, resulting in pro-inflammatory responses, pro-oxidative conditions and apoptosis. Its association with oxLDL induces the activation of NF-kappa-B through an increased production of intracellular reactive oxygen and a variety of pro-atherogenic cellular responses including a reduction of nitric oxide (NO) release, monocyte adhesion and apoptosis. In addition to binding oxLDL, it acts as a receptor for the HSP70 protein involved in antigen cross-presentation to naive T-cells in dendritic cells, thereby participating in cell-mediated antigen cross-presentation. Also involved in inflammatory process, by acting as a leukocyte-adhesion molecule at the vascular interface in endotoxin-induced inflammation. Also acts as a receptor for advanced glycation end (AGE) products, activated platelets, monocytes, apoptotic cells and both Gram-negative and Gram-positive bacteria. This is Oxidized low-density lipoprotein receptor 1 (OLR1) from Oryctolagus cuniculus (Rabbit).